Consider the following 921-residue polypeptide: MEYKDTLLMPKTDFPMRGNLPNKEPEWQAKWEEEKLYEKIQEKNAGRKAYILHDGPPYANGELHMGHALNKTIKDIIVRYKSMAGFSSPYVPGWDTHGLPIETAIAKKGVKRKEMSIAEFRKLCAEYAMTQVDGQRTGFKRLGINGDWENPYITLLPEYEAEQIKVFGEMAKKGYIYKGKKPVYWSPSSESALAEAEIEYQDKTSASIFVAFKVTDGKGVLDEGTNIVIWTTTPWTIPANMGITVNPDLDYVVIESAGEKYVVAEALLPSLREKLGFEDATVVKTVRGSELDRVVTKHPFYDRDSLVMNGEHATAEAGTGAVHTAPGHGEDDFLIGKKYDLEILAPLDDRGVFTEEAPGFEGVFYDTANKMVTEKLEEVGALLKMEFITHSYPHDWRTKKPVIFRATAQWFASIDAFRDDLLAAVKGVNWTPAWGETRLFNMVRDRGDWVISRQRAWGVPLPIFYAENGEAIITDETINHISELFREHGSNVWFERDVKDLLPAGFTHPGSPNGEFTKETDIMDVWFDSGSSHQAVLNARPELSRPADLYMEGSDQYRGWFNSSLTTAVAITGEAPYRNVLSHGFALDGEGRKMSKSLGNTLLPGKVIKQLGADIVRLWVASVDYQADVRVSDEILKQVSEVYRKIRNTMRFLLGNINDFNPTTNGVSYENLREVDKYMLIKLNDLVKNVKDSYEAFEFSTIYHQINNFCTVELSQFYMDFAKDVVYIEAADSHDRRAMQTVFYEAVVTLTKLLAPILPHTTEEVWNSLIGEGAESIHLQDLPDVKVLADSEEITAKWDAFMQIRDNVQKALEFARNEKLIGKSMLAKVTLYVDGEAKTLFDSLEGDFAQLFIVSDFELVEGLENAPESAFKSNQVAVQITVAEGETCERCRVVKKDVGVNPKHPTLCGRCADIVVKHYEA.

The 'HIGH' region motif lies at proline 57 to histidine 67. Residue glutamate 552 participates in L-isoleucyl-5'-AMP binding. Positions lysine 593 to serine 597 match the 'KMSKS' region motif. ATP is bound at residue lysine 596. Residues cysteine 888, cysteine 891, cysteine 908, and cysteine 911 each coordinate Zn(2+).

This sequence belongs to the class-I aminoacyl-tRNA synthetase family. IleS type 1 subfamily. Monomer. Requires Zn(2+) as cofactor.

It localises to the cytoplasm. It carries out the reaction tRNA(Ile) + L-isoleucine + ATP = L-isoleucyl-tRNA(Ile) + AMP + diphosphate. In terms of biological role, catalyzes the attachment of isoleucine to tRNA(Ile). As IleRS can inadvertently accommodate and process structurally similar amino acids such as valine, to avoid such errors it has two additional distinct tRNA(Ile)-dependent editing activities. One activity is designated as 'pretransfer' editing and involves the hydrolysis of activated Val-AMP. The other activity is designated 'posttransfer' editing and involves deacylation of mischarged Val-tRNA(Ile). This Listeria innocua serovar 6a (strain ATCC BAA-680 / CLIP 11262) protein is Isoleucine--tRNA ligase.